A 213-amino-acid chain; its full sequence is uncharacterized protein (213 aa).

This is an uncharacterized protein from Escherichia coli (strain UTI89 / UPEC).